The chain runs to 68 residues: ATP synthase subunit K, mitochondrial (68 aa).

Residues 15–31 form a helical membrane-spanning segment; sequence HQLAIGTLGLLGLLVVP.

This sequence belongs to the ATP19 family. In terms of assembly, F-type ATPases have 2 components, CF(1) - the catalytic core - and CF(0) - the membrane proton channel. In yeast, the dimeric form of ATP synthase consists of 17 polypeptides: alpha, beta, gamma, delta, epsilon, 4 (B), 5 (OSCP), 6 (A), 8, 9 (C), d, E (Tim11), f, g, h, i/j and k.

The protein localises to the mitochondrion inner membrane. Mitochondrial membrane ATP synthase (F(1)F(0) ATP synthase or Complex V) produces ATP from ADP in the presence of a proton gradient across the membrane which is generated by electron transport complexes of the respiratory chain. F-type ATPases consist of two structural domains, F(1) - containing the extramembraneous catalytic core and F(0) - containing the membrane proton channel, linked together by a central stalk and a peripheral stalk. During catalysis, ATP synthesis in the catalytic domain of F(1) is coupled via a rotary mechanism of the central stalk subunits to proton translocation. Part of the complex F(0) domain. Minor subunit located with subunit a in the membrane. The K chain binds the dimeric form by interacting with the G and E chains. The chain is ATP synthase subunit K, mitochondrial (ATP19) from Saccharomyces cerevisiae (strain ATCC 204508 / S288c) (Baker's yeast).